Consider the following 717-residue polypeptide: MCGIFGYCNYLVERSRGEIIDTLVDGLQRLEYRGYDSTGIAIDGDEADSTFIYKQIGKVSALKEEITKQNPNRDVTFVSHCGIAHTRWATHGRPEQVNCHPQRSDPEDQFVVVHNGIITNFRELKTLLINKGYKFESDTDTECIAKLYLHLYNTNLQNGHDLDFHELTKLVLLELEGSYGLLCKSCHYPNEVIATRKGSPLLIGVKSEKKLKVDFVDVEFPEENAGQPEIPLKSNNKSFGLGPKKAREFEAGSQNANLLPIAANEFNLRHSQSRAFLSEDGSPTPVEFFVSSDAASVVKHTKKVLFLEDDDLAHIYDGELHIHRSRREVGASMTRSIQTLEMELAQIMKGPYDHFMQKEIYEQPESTFNTMRGRIDYENNKVILGGLKAWLPVVRRARRLIMIACGTSYHSCLATRAIFEELSDIPVSVELASDFLDRKCPVFRDDVCVFVSQSGETADTMLALNYCLERGALTVGIVNSVGSSISRVTHCGVHINAGPEIGVASTKAYTSQYIALVMFALSLSDDRVSKIDRRIEIIQGLKLIPGQIKQVLKLEPRIKKLCATELKDQKSLLLLGRGYQFAAALEGALKIKEISYMHSEGVLAGELKHGVLALVDENLPIIAFGTRDSLFPKVVSSIEQVTARKGHPIIICNENDEVWAQKSKSIDLQTLEVPQTVDCLQGLINIIPLQLMSYWLAVNKGIDVDFPRNLAKSVTVE.

C2 (for GATase activity) is an active-site residue. The Glutamine amidotransferase type-2 domain maps to 2-318 (CGIFGYCNYL…DDDLAHIYDG (317 aa)). S253 is subject to Phosphoserine. The residue at position 334 (T334) is a Phosphothreonine. Phosphoserine is present on S336. SIS domains follow at residues 390–529 (WLPV…DRVS) and 562–707 (CATE…VDFP).

The enzyme catalyses D-fructose 6-phosphate + L-glutamine = D-glucosamine 6-phosphate + L-glutamate. It functions in the pathway nucleotide-sugar biosynthesis; UDP-N-acetyl-alpha-D-glucosamine biosynthesis; alpha-D-glucosamine 6-phosphate from D-fructose 6-phosphate: step 1/1. Functionally, involved in amino sugar synthesis (formation of chitin, supplies the amino sugars of asparagine-linked oligosaccharides of glycoproteins). This chain is Glutamine--fructose-6-phosphate aminotransferase [isomerizing] (GFA1), found in Saccharomyces cerevisiae (strain ATCC 204508 / S288c) (Baker's yeast).